A 179-amino-acid chain; its full sequence is NADH dehydrogenase [ubiquinone] 1 beta subcomplex subunit 9 (179 aa).

At Ala2 the chain carries N-acetylalanine. Position 85 is a phosphoserine (Ser85). A disordered region spans residues 136-162 (EVKQLQEETPPGGPLTEALPPARKEGD).

This sequence belongs to the complex I LYR family. Mammalian complex I is composed of 45 different subunits.

It is found in the mitochondrion inner membrane. In terms of biological role, accessory subunit of the mitochondrial membrane respiratory chain NADH dehydrogenase (Complex I), that is believed to be not involved in catalysis. Complex I functions in the transfer of electrons from NADH to the respiratory chain. The immediate electron acceptor for the enzyme is believed to be ubiquinone. This Homo sapiens (Human) protein is NADH dehydrogenase [ubiquinone] 1 beta subcomplex subunit 9 (NDUFB9).